The primary structure comprises 301 residues: WD repeat-containing protein SL1-17 (301 aa).

WD repeat units lie at residues 11–54 (AHKE…LKCL), 59–98 (GHRL…LTKT), 101–140 (GDPA…KEGS), 143–182 (LEGK…VQFL), 184–223 (GHAT…LVIP), 227–266 (GHKG…EKHC), and 269–300 (THED…IYQC).

The protein is WD repeat-containing protein SL1-17 of Schistosoma mansoni (Blood fluke).